The chain runs to 1134 residues: MYQMNAKMHFTFVFALLVVSFNLDVLGKNLKYRIYEEQRVGSVIARLSEDVADVLVKLPNPSTVRFRAMQRGNTPLLVVNEDNGEISIGAKIDREQLCQKNLNCSIEFDVITLPTEHLQLFHIEVEVLDINDNSPQFSRSLIPIEISESAAVGTRIPLDSAFDPDVGENSLHTYSLSANDFFNIEVRTRTDGAKYAELIVVRELDRELKSSYELQLTASDMGVPQRSGSSILKISISDSNDNSPAFEQQSYIIQLLENSPVGTLLLDLNATDPDEGANGKIVYSFSSHVSPKIIETFKIDSERGHLTLFKQVDYEITKSYEIDVQAQDLGPNSIPAHCKIIIKVVDVNDNKPEISINLMSPGKEEISYIFEGDPIDTFVALVRVQDKDSGLNGEIVCKLHGHGHFKLQKTYENNYLILTNATLDREKRSEYSLTVIAEDKGTPSLSTVKHFTVQINDINDNPPHFQRSRYEFAISENNSPGAYITTVTATDPDLGENGQVTYTILESFILGSSITTYDTIDPSNGAIYALRIFDHEEVSQITFVVEARDGGSPKQLVSNTTVVLTIIDENDNVPVVIGPALRNNTAEISIPKGAESGFHVTRIRAIDRDSGVNAELSCSIVAGNEENIFVIDPRSCDIHTNVSMESVPYTEWELSVVIQDKGNPQLHTKVLLKCVIFEYAESVTSTAMTSVSQAPLDVSMIIIISLGAICAVLLVIMVLFATRCNREKKDTRSYNCRVAESTYQHHPKRPSRQIHKGDITLVPTVNGTLPIRSHHRSSPSSSPTLERGQMGSRQSHNSHQSLNSLVTISSNHVPENFSLELTHATPAVEVSQLLSMLHQGQYQPRPSFRGNKYSRSYRYALQDMDKFSLKDSGRGDSEAGDSDYDLGRDSPIDRLLGEGFSDLFLTDGRIPAAMRLCTEECRVLGHSDQCWMPPLPSPSSDYRSNMFIPGEEFPAQPQQQHPHQSLEDDVQPVDSGEKKKSFSTFGKDSPSEEDSGDTSTSSLLSEMSSVFQRLLPASLDTYSECTEMDRSNSLERRKGPLPAKTVGYPQGVAAWAASTHFQNPTNNSGPPLGTHSSVQPSSKWLPAMEEIPENYEEDDFDNVLNHLNDGKHELMDASELVAEINKLLQDVRQS.

Residues 1 to 27 (MYQMNAKMHFTFVFALLVVSFNLDVLG) form the signal peptide. Cadherin domains are found at residues 28–137 (KNLK…SPQF), 138–246 (SRSL…SPAF), 247–354 (EQQS…KPEI), 361–465 (PGKE…PPHF), 466–576 (QRSR…VPVV), and 582–697 (RNNT…APLD). The Extracellular segment spans residues 28-699 (KNLKYRIYEE…SVSQAPLDVS (672 aa)). N103 carries an N-linked (GlcNAc...) asparagine glycan. An N-linked (GlcNAc...) asparagine glycan is attached at N269. N559 carries an N-linked (GlcNAc...) asparagine glycan. The chain crosses the membrane as a helical span at residues 700–720 (MIIIISLGAICAVLLVIMVLF). The Cytoplasmic portion of the chain corresponds to 721 to 1134 (ATRCNREKKD…NKLLQDVRQS (414 aa)). Disordered regions lie at residues 768 to 800 (TLPI…NSHQ), 868 to 888 (SLKD…DLGR), and 941 to 1003 (DYRS…TSSL). Residues 791 to 800 (GSRQSHNSHQ) are compositionally biased toward polar residues. Residues 868–877 (SLKDSGRGDS) show a composition bias toward basic and acidic residues. Positions 892–1134 (IDRLLGEGFS…NKLLQDVRQS (243 aa)) are interaction with DAB1.

As to quaternary structure, interacts with DAB1.

Its subcellular location is the cell membrane. In terms of biological role, potential calcium-dependent cell-adhesion protein. The protein is Protocadherin-18 (PCDH18) of Bos taurus (Bovine).